Reading from the N-terminus, the 239-residue chain is 7-cyano-7-deazaguanine synthase (239 aa).

Phenylalanine 16–leucine 26 is a binding site for ATP. Cysteine 204, cysteine 219, cysteine 222, and cysteine 225 together coordinate Zn(2+).

It belongs to the QueC family. Requires Zn(2+) as cofactor.

It catalyses the reaction 7-carboxy-7-deazaguanine + NH4(+) + ATP = 7-cyano-7-deazaguanine + ADP + phosphate + H2O + H(+). It participates in purine metabolism; 7-cyano-7-deazaguanine biosynthesis. Catalyzes the ATP-dependent conversion of 7-carboxy-7-deazaguanine (CDG) to 7-cyano-7-deazaguanine (preQ(0)). This is 7-cyano-7-deazaguanine synthase from Polaromonas naphthalenivorans (strain CJ2).